Reading from the N-terminus, the 531-residue chain is Light-independent protochlorophyllide reductase subunit B (531 aa).

D36 contributes to the [4Fe-4S] cluster binding site. Residue D287 is the Proton donor of the active site. G422–L423 lines the substrate pocket.

The protein belongs to the ChlB/BchB/BchZ family. In terms of assembly, protochlorophyllide reductase is composed of three subunits; BchL, BchN and BchB. Forms a heterotetramer of two BchB and two BchN subunits. The cofactor is [4Fe-4S] cluster.

It carries out the reaction chlorophyllide a + oxidized 2[4Fe-4S]-[ferredoxin] + 2 ADP + 2 phosphate = protochlorophyllide a + reduced 2[4Fe-4S]-[ferredoxin] + 2 ATP + 2 H2O. It participates in porphyrin-containing compound metabolism; bacteriochlorophyll biosynthesis (light-independent). Component of the dark-operative protochlorophyllide reductase (DPOR) that uses Mg-ATP and reduced ferredoxin to reduce ring D of protochlorophyllide (Pchlide) to form chlorophyllide a (Chlide). This reaction is light-independent. The NB-protein (BchN-BchB) is the catalytic component of the complex. The sequence is that of Light-independent protochlorophyllide reductase subunit B from Rhodopseudomonas palustris (strain BisA53).